Consider the following 575-residue polypeptide: Phosphoenolpyruvate-protein phosphotransferase (575 aa).

His191 functions as the Tele-phosphohistidine intermediate in the catalytic mechanism. Phosphoenolpyruvate is bound by residues Arg298 and Arg334. 2 residues coordinate Mg(2+): Glu435 and Asp459. Phosphoenolpyruvate is bound by residues Asn458–Asp459 and Arg469. Cys506 (proton donor) is an active-site residue.

The protein belongs to the PEP-utilizing enzyme family. As to quaternary structure, homodimer. Requires Mg(2+) as cofactor.

It is found in the cytoplasm. It carries out the reaction L-histidyl-[protein] + phosphoenolpyruvate = N(pros)-phospho-L-histidyl-[protein] + pyruvate. Its function is as follows. General (non sugar-specific) component of the phosphoenolpyruvate-dependent sugar phosphotransferase system (sugar PTS). This major carbohydrate active-transport system catalyzes the phosphorylation of incoming sugar substrates concomitantly with their translocation across the cell membrane. Enzyme I transfers the phosphoryl group from phosphoenolpyruvate (PEP) to the phosphoryl carrier protein (HPr). The chain is Phosphoenolpyruvate-protein phosphotransferase (ptsI) from Lactococcus lactis subsp. cremoris (Streptococcus cremoris).